We begin with the raw amino-acid sequence, 615 residues long: DNA mismatch repair protein MutL (615 aa).

The interval 363–397 (FAEPAVREPVAPRYTPAPASGSRPAAPWPNAQPGY) is disordered. Over residues 378–391 (PAPASGSRPAAPWP) the composition is skewed to low complexity.

The protein belongs to the DNA mismatch repair MutL/HexB family.

This protein is involved in the repair of mismatches in DNA. It is required for dam-dependent methyl-directed DNA mismatch repair. May act as a 'molecular matchmaker', a protein that promotes the formation of a stable complex between two or more DNA-binding proteins in an ATP-dependent manner without itself being part of a final effector complex. The sequence is that of DNA mismatch repair protein MutL from Escherichia coli O157:H7 (strain EC4115 / EHEC).